A 429-amino-acid polypeptide reads, in one-letter code: Tol-Pal system protein TolB (429 aa).

Positions 1–22 (MTRRLFILITIMLCLIPALLHS) are cleaved as a signal peptide. Disordered stretches follow at residues 362–383 (PDGTNDTRLTSEGSNEHPRWSP) and 407–429 (GSGQTRVSGGKGRDSHPTWSPRW). Positions 363–374 (DGTNDTRLTSEG) are enriched in polar residues.

Belongs to the TolB family. As to quaternary structure, the Tol-Pal system is composed of five core proteins: the inner membrane proteins TolA, TolQ and TolR, the periplasmic protein TolB and the outer membrane protein Pal. They form a network linking the inner and outer membranes and the peptidoglycan layer.

The protein resides in the periplasm. Part of the Tol-Pal system, which plays a role in outer membrane invagination during cell division and is important for maintaining outer membrane integrity. The sequence is that of Tol-Pal system protein TolB from Geobacter metallireducens (strain ATCC 53774 / DSM 7210 / GS-15).